A 235-amino-acid polypeptide reads, in one-letter code: Small ribosomal subunit protein uS2c (235 aa).

This sequence belongs to the universal ribosomal protein uS2 family.

The protein localises to the plastid. It is found in the chloroplast. This chain is Small ribosomal subunit protein uS2c (rps2), found in Huperzia lucidula (Shining clubmoss).